Reading from the N-terminus, the 174-residue chain is Beta-lactoglobulin (174 aa).

Positions 1–18 (MKFLLLTVGLTSICAIQA) are cleaved as a signal peptide. 2 disulfides stabilise this stretch: C79–C172 and C122–C134.

It belongs to the calycin superfamily. Lipocalin family. In terms of assembly, monomer.

Its subcellular location is the secreted. Lactoglobulin is the primary component of whey, it binds retinol and is probably involved in the transport of that molecule. The chain is Beta-lactoglobulin (LGB) from Trichosurus vulpecula (Brush-tailed possum).